Here is a 1459-residue protein sequence, read N- to C-terminus: DNA-binding protein RFX7 (1459 aa).

The tract at residues 1–27 (MAEEQQQPPPQQLDAPQQLPLSAPNPG) is disordered. Residues 12 to 21 (QLDAPQQLPL) show a composition bias toward low complexity. Positions 108 to 183 (AFSWIRNTLE…YCYSGLRKKA (76 aa)) form a DNA-binding region, RFX-type winged-helix. The short motif at 188–193 (PTLPNL) is the PxLPxI/L motif; mediates interaction with ANKRA2 and RFXANK element. Disordered stretches follow at residues 303 to 347 (AKQQ…LPNG), 404 to 428 (SVKQTPKTPQNVPASPGGDRSARHR), 482 to 590 (PSNS…GVTE), 634 to 659 (FTSTSSPSNGDSVNKDPKICTKSPRK), 688 to 716 (GQKPGTVKKDQKVPHSGKTESSTAGAQIP), and 918 to 1016 (SVTP…VPPS). Composition is skewed to polar residues over residues 404-416 (SVKQTPKTPQNVP) and 482-502 (PSNSNAPLKHSASVSSATGTT). Low complexity predominate over residues 521–534 (SPGSRASSTGGTSA). A compositionally biased stretch (basic and acidic residues) spans 537-549 (VKMEPEGSSDEHP). Composition is skewed to polar residues over residues 562–578 (PLTTSSALWGQKSNTDG), 634–645 (FTSTSSPSNGDS), and 706–716 (TESSTAGAQIP). Over residues 947-963 (TPTPTPTPTPTPTPTPT) the composition is skewed to pro residues. The segment covering 971 to 1009 (GSQSLSRESPCSRLAQTTPVDSALGSSRHTPIGTPHSNC) has biased composition (polar residues).

It belongs to the RFX family. In terms of assembly, interacts (via PxLPxI/L motif) with RFXANK (via ankyrin repeats). Interacts (via PxLPxI/L motif) with ANKRA2 (via ankyrin repeats). Expressed in spleen and lymph node and to a lower extend in brain (at protein level). Expressed in lymphoid organs and lymphoid cell subsets. Expressed throughout natural killer (NK) cell maturation.

The protein localises to the nucleus. Functionally, transcription factor. Acts as a transcriptional activator by binding to promoter regions of target genes, such as Rec8, Mxd4 and Ddit4. Plays a role in natural killer (NK) cell maintenance and immunity. May play a role in the process of ciliogenesis in the neural tube and neural tube closure. The sequence is that of DNA-binding protein RFX7 from Mus musculus (Mouse).